A 574-amino-acid chain; its full sequence is Avenacosidase 1 (574 aa).

The transit peptide at 1–55 (MALLCSALSNSTHPSFRSHIGANSENLWHLSADPAQKSKRRCNLTLSSRAARISS) directs the protein to the chloroplast. A beta-D-glucoside-binding positions include Gln-88, His-192, and 237–238 (NE). The active-site Proton donor is Glu-238. Cys-258 and Cys-264 are oxidised to a cystine. A beta-D-glucoside-binding positions include Tyr-381, Glu-454, Trp-505, 512–513 (EW), and Phe-521. Catalysis depends on Glu-454, which acts as the Nucleophile.

This sequence belongs to the glycosyl hydrolase 1 family. Homo- and heteromultimer with P60B in a 1:1 stoichiometry. Aggregates to form the fibrillar stromacentre. In terms of tissue distribution, expressed in caryopses, coleoptiles, primary leaves, and etiolated and green seedlings, but not in roots.

Its subcellular location is the plastid. It is found in the chloroplast stroma. It carries out the reaction avenacoside B + H2O = 26-desgluco-avenacoside B + D-glucose. Inhibited by N-(3-Dimethylaminopropyl)-N'-ethylcarbodiimide hydrochloride (EDC). Beta-glucosidase acting as a preformed defense system. Hydrolyzes the bisdesmosides avenacosides A and B to 26-desgluco-avenacosides exhibiting fungicidal activity. Can use beta-fucoside &gt; beta-glucoside &gt; beta-galactoside &gt; beta-xyloside as substrates, but not alpha-glycosides, beta-thioglucosides and disaccharides. The sequence is that of Avenacosidase 1 (P60A) from Avena sativa (Oat).